The sequence spans 167 residues: NADH-quinone oxidoreductase subunit B (167 aa).

The [4Fe-4S] cluster site is built by cysteine 40, cysteine 41, cysteine 105, and cysteine 134.

It belongs to the complex I 20 kDa subunit family. NDH-1 is composed of 14 different subunits. Subunits NuoB, C, D, E, F, and G constitute the peripheral sector of the complex. It depends on [4Fe-4S] cluster as a cofactor.

It localises to the cell inner membrane. It catalyses the reaction a quinone + NADH + 5 H(+)(in) = a quinol + NAD(+) + 4 H(+)(out). NDH-1 shuttles electrons from NADH, via FMN and iron-sulfur (Fe-S) centers, to quinones in the respiratory chain. The immediate electron acceptor for the enzyme in this species is believed to be ubiquinone. Couples the redox reaction to proton translocation (for every two electrons transferred, four hydrogen ions are translocated across the cytoplasmic membrane), and thus conserves the redox energy in a proton gradient. This Campylobacter jejuni subsp. jejuni serotype O:6 (strain 81116 / NCTC 11828) protein is NADH-quinone oxidoreductase subunit B.